The primary structure comprises 210 residues: Pyridoxine/pyridoxamine 5'-phosphate oxidase (210 aa).

Residues 7-10 and K65 each bind substrate; that span reads REDY. Residues 60-65, 75-76, R81, K82, and Q104 contribute to the FMN site; these read RMVLLK and FT. Y122, R126, and S130 together coordinate substrate. FMN is bound by residues 139 to 140 and W183; that span reads QS. 189 to 191 contributes to the substrate binding site; that stretch reads RLH. R193 lines the FMN pocket.

Belongs to the pyridoxamine 5'-phosphate oxidase family. In terms of assembly, homodimer. FMN is required as a cofactor.

It catalyses the reaction pyridoxamine 5'-phosphate + O2 + H2O = pyridoxal 5'-phosphate + H2O2 + NH4(+). The catalysed reaction is pyridoxine 5'-phosphate + O2 = pyridoxal 5'-phosphate + H2O2. Its pathway is cofactor metabolism; pyridoxal 5'-phosphate salvage; pyridoxal 5'-phosphate from pyridoxamine 5'-phosphate: step 1/1. The protein operates within cofactor metabolism; pyridoxal 5'-phosphate salvage; pyridoxal 5'-phosphate from pyridoxine 5'-phosphate: step 1/1. Catalyzes the oxidation of either pyridoxine 5'-phosphate (PNP) or pyridoxamine 5'-phosphate (PMP) into pyridoxal 5'-phosphate (PLP). In Neisseria meningitidis serogroup B (strain ATCC BAA-335 / MC58), this protein is Pyridoxine/pyridoxamine 5'-phosphate oxidase.